The primary structure comprises 358 residues: 3-isopropylmalate dehydrogenase (358 aa).

NAD(+) is bound at residue 77-90 (GPKWTNLPPDQQPE). Substrate contacts are provided by arginine 98, arginine 108, arginine 137, and aspartate 226. Positions 226, 250, and 254 each coordinate Mg(2+). 284 to 296 (GSAPDIAGKGIAN) serves as a coordination point for NAD(+).

This sequence belongs to the isocitrate and isopropylmalate dehydrogenases family. LeuB type 1 subfamily. In terms of assembly, homodimer. The cofactor is Mg(2+). Requires Mn(2+) as cofactor.

The protein resides in the cytoplasm. It catalyses the reaction (2R,3S)-3-isopropylmalate + NAD(+) = 4-methyl-2-oxopentanoate + CO2 + NADH. It participates in amino-acid biosynthesis; L-leucine biosynthesis; L-leucine from 3-methyl-2-oxobutanoate: step 3/4. In terms of biological role, catalyzes the oxidation of 3-carboxy-2-hydroxy-4-methylpentanoate (3-isopropylmalate) to 3-carboxy-4-methyl-2-oxopentanoate. The product decarboxylates to 4-methyl-2 oxopentanoate. This Haemophilus influenzae (strain 86-028NP) protein is 3-isopropylmalate dehydrogenase.